A 250-amino-acid polypeptide reads, in one-letter code: LOB domain-containing protein 37 (250 aa).

Positions 1–107 (MSCNGCRVLR…VETVLRGGSL (107 aa)) constitute an LOB domain. The disordered stretch occupies residues 145–227 (DSTDRNIYHH…DSGTTTTTTA (83 aa)). The segment covering 157–170 (FSSSRSRSTMDSSS) has biased composition (low complexity).

It belongs to the LOB domain-containing protein family. As to expression, expressed in young shoots, roots, stems, leaves and flowers.

This chain is LOB domain-containing protein 37 (LBD37), found in Arabidopsis thaliana (Mouse-ear cress).